Here is a 521-residue protein sequence, read N- to C-terminus: ATP synthase subunit beta (521 aa).

2 stretches are compositionally biased toward low complexity: residues 1 to 21 (MAKA…AAKA) and 28 to 42 (PKTT…TKSG). The interval 1 to 42 (MAKAATPKTTAAAEAKPAAKAPAKKAAPKTTAAAKPAATKSG) is disordered. 199–206 (GGAGVGKT) serves as a coordination point for ATP.

Belongs to the ATPase alpha/beta chains family. F-type ATPases have 2 components, CF(1) - the catalytic core - and CF(0) - the membrane proton channel. CF(1) has five subunits: alpha(3), beta(3), gamma(1), delta(1), epsilon(1). CF(0) has three main subunits: a(1), b(2) and c(9-12). The alpha and beta chains form an alternating ring which encloses part of the gamma chain. CF(1) is attached to CF(0) by a central stalk formed by the gamma and epsilon chains, while a peripheral stalk is formed by the delta and b chains.

The protein localises to the cell inner membrane. It carries out the reaction ATP + H2O + 4 H(+)(in) = ADP + phosphate + 5 H(+)(out). Functionally, produces ATP from ADP in the presence of a proton gradient across the membrane. The catalytic sites are hosted primarily by the beta subunits. The polypeptide is ATP synthase subunit beta (Brucella canis (strain ATCC 23365 / NCTC 10854 / RM-666)).